Reading from the N-terminus, the 627-residue chain is Polyadenylate-binding protein, cytoplasmic and nuclear (627 aa).

Over residues 1–11 (MSAADANQVQE) the composition is skewed to polar residues. A disordered region spans residues 1 to 46 (MSAADANQVQESLEKLNLDSAPVASTEETEQTASGETEEAADSAQV). 4 consecutive RRM domains span residues 51–129 (ASLY…WSQR), 139–216 (GNIF…KHIS), 232–309 (TNVY…RAQK), and 335–412 (VNLF…LAQR). Residues 511 to 535 (DFNNGANGGRQQRGYYPNRNQNQKG) show a composition bias toward low complexity. Positions 511 to 537 (DFNNGANGGRQQRGYYPNRNQNQKGRQ) are disordered. In terms of domain architecture, PABC spans 537–618 (QQKDLAAIIA…ALTAFEEYKK (82 aa)).

This sequence belongs to the polyadenylate-binding protein type-1 family.

The protein localises to the cytoplasm. It is found in the nucleus. In terms of biological role, binds the poly(A) tail of mRNA. Appears to be an important mediator of the multiple roles of the poly(A) tail in mRNA biogenesis, stability and translation. In the nucleus, involved in both mRNA cleavage and polyadenylation. Is also required for efficient mRNA export to the cytoplasm. Acts in concert with a poly(A)-specific nuclease (PAN) to affect poly(A) tail shortening, which may occur concomitantly with either nucleocytoplasmic mRNA transport or translational initiation. In the cytoplasm, stimulates translation initiation and regulates mRNA decay through translation termination-coupled poly(A) shortening, probably mediated by PAN. In Debaryomyces hansenii (strain ATCC 36239 / CBS 767 / BCRC 21394 / JCM 1990 / NBRC 0083 / IGC 2968) (Yeast), this protein is Polyadenylate-binding protein, cytoplasmic and nuclear (PAB1).